The following is a 244-amino-acid chain: Aspartate/glutamate leucyltransferase (244 aa).

The protein belongs to the R-transferase family. Bpt subfamily.

It is found in the cytoplasm. It carries out the reaction N-terminal L-glutamyl-[protein] + L-leucyl-tRNA(Leu) = N-terminal L-leucyl-L-glutamyl-[protein] + tRNA(Leu) + H(+). It catalyses the reaction N-terminal L-aspartyl-[protein] + L-leucyl-tRNA(Leu) = N-terminal L-leucyl-L-aspartyl-[protein] + tRNA(Leu) + H(+). In terms of biological role, functions in the N-end rule pathway of protein degradation where it conjugates Leu from its aminoacyl-tRNA to the N-termini of proteins containing an N-terminal aspartate or glutamate. The chain is Aspartate/glutamate leucyltransferase from Bordetella parapertussis (strain 12822 / ATCC BAA-587 / NCTC 13253).